A 334-amino-acid chain; its full sequence is Holliday junction branch migration complex subunit RuvB (334 aa).

Residues 4–184 are large ATPase domain (RuvB-L); the sequence is ADRLISAAVI…FGIVQRLEFY (181 aa). Residues isoleucine 23, arginine 24, glycine 65, lysine 68, threonine 69, threonine 70, 131 to 133, arginine 174, tyrosine 184, and arginine 221 contribute to the ATP site; that span reads EDY. Threonine 69 lines the Mg(2+) pocket. The small ATPAse domain (RuvB-S) stretch occupies residues 185-255; that stretch reads QVADLEHIVS…VAMKALDMLN (71 aa). Residues 258 to 334 form a head domain (RuvB-H) region; the sequence is AEGFDFMDRK…YKHFGITREE (77 aa). Residues arginine 294, arginine 313, and arginine 318 each contribute to the DNA site.

Belongs to the RuvB family. As to quaternary structure, homohexamer. Forms an RuvA(8)-RuvB(12)-Holliday junction (HJ) complex. HJ DNA is sandwiched between 2 RuvA tetramers; dsDNA enters through RuvA and exits via RuvB. An RuvB hexamer assembles on each DNA strand where it exits the tetramer. Each RuvB hexamer is contacted by two RuvA subunits (via domain III) on 2 adjacent RuvB subunits; this complex drives branch migration. In the full resolvosome a probable DNA-RuvA(4)-RuvB(12)-RuvC(2) complex forms which resolves the HJ.

It localises to the cytoplasm. The catalysed reaction is ATP + H2O = ADP + phosphate + H(+). In terms of biological role, the RuvA-RuvB-RuvC complex processes Holliday junction (HJ) DNA during genetic recombination and DNA repair, while the RuvA-RuvB complex plays an important role in the rescue of blocked DNA replication forks via replication fork reversal (RFR). RuvA specifically binds to HJ cruciform DNA, conferring on it an open structure. The RuvB hexamer acts as an ATP-dependent pump, pulling dsDNA into and through the RuvAB complex. RuvB forms 2 homohexamers on either side of HJ DNA bound by 1 or 2 RuvA tetramers; 4 subunits per hexamer contact DNA at a time. Coordinated motions by a converter formed by DNA-disengaged RuvB subunits stimulates ATP hydrolysis and nucleotide exchange. Immobilization of the converter enables RuvB to convert the ATP-contained energy into a lever motion, pulling 2 nucleotides of DNA out of the RuvA tetramer per ATP hydrolyzed, thus driving DNA branch migration. The RuvB motors rotate together with the DNA substrate, which together with the progressing nucleotide cycle form the mechanistic basis for DNA recombination by continuous HJ branch migration. Branch migration allows RuvC to scan DNA until it finds its consensus sequence, where it cleaves and resolves cruciform DNA. In Yersinia pseudotuberculosis serotype O:1b (strain IP 31758), this protein is Holliday junction branch migration complex subunit RuvB.